The chain runs to 93 residues: Integration host factor subunit beta (93 aa).

Belongs to the bacterial histone-like protein family. Heterodimer of an alpha and a beta chain.

In terms of biological role, this protein is one of the two subunits of integration host factor, a specific DNA-binding protein that functions in genetic recombination as well as in transcriptional and translational control. This chain is Integration host factor subunit beta, found in Actinobacillus pleuropneumoniae serotype 7 (strain AP76).